Here is a 216-residue protein sequence, read N- to C-terminus: 2',3'-cyclic-nucleotide 3'-phosphodiesterase (216 aa).

His39 serves as the catalytic Proton donor/acceptor. Thr41 contributes to the substrate binding site. The Proton donor/acceptor role is filled by His153. Residues Ser155 and Tyr158 each coordinate substrate.

Belongs to the 2H phosphoesterase superfamily. CPD1 family.

It is found in the golgi apparatus. It carries out the reaction a nucleoside 2',3'-cyclic phosphate + H2O = a nucleoside 2'-phosphate + H(+). In terms of biological role, involved in the metabolism of ADP-ribose 1',2'-cyclic phosphate which is produced as a consequence of tRNA splicing. This chain is 2',3'-cyclic-nucleotide 3'-phosphodiesterase (CPD1), found in Yarrowia lipolytica (strain CLIB 122 / E 150) (Yeast).